The chain runs to 481 residues: Glutamate--tRNA ligase (481 aa).

The 'HIGH' region motif lies at 11–21 (PSPTGLLHIGN). Positions 255 to 259 (KLSKR) match the 'KMSKS' region motif. Lys258 is a binding site for ATP.

This sequence belongs to the class-I aminoacyl-tRNA synthetase family. Glutamate--tRNA ligase type 1 subfamily. In terms of assembly, monomer.

The protein localises to the cytoplasm. The enzyme catalyses tRNA(Glu) + L-glutamate + ATP = L-glutamyl-tRNA(Glu) + AMP + diphosphate. Functionally, catalyzes the attachment of glutamate to tRNA(Glu) in a two-step reaction: glutamate is first activated by ATP to form Glu-AMP and then transferred to the acceptor end of tRNA(Glu). The sequence is that of Glutamate--tRNA ligase from Streptococcus pyogenes serotype M6 (strain ATCC BAA-946 / MGAS10394).